The following is a 279-amino-acid chain: Elongation factor Ts (279 aa).

The interval 80 to 83 is involved in Mg(2+) ion dislocation from EF-Tu; the sequence is TDFV.

Belongs to the EF-Ts family.

The protein resides in the cytoplasm. In terms of biological role, associates with the EF-Tu.GDP complex and induces the exchange of GDP to GTP. It remains bound to the aminoacyl-tRNA.EF-Tu.GTP complex up to the GTP hydrolysis stage on the ribosome. The polypeptide is Elongation factor Ts (Borreliella afzelii (strain PKo) (Borrelia afzelii)).